The primary structure comprises 425 residues: Protein PTI1 (425 aa).

Phosphoserine is present on S272.

As to quaternary structure, component of the cleavage and polyadenylation factor (CPF) complex, which is composed of PTI1, SYC1, SSU72, GLC7, MPE1, REF2, PFS2, PTA1, YSH1/BRR5, SWD2, CFT2/YDH1, YTH1, CFT1/YHH1, FIP1 and PAP1. Component of the APT complex, which is a subcomplex of CPF, and is composed of PTI1, SYC1, SSU72, GLC7, REF2, PTA1 and SWD2.

Its subcellular location is the nucleus. Its function is as follows. Component of the cleavage and polyadenylation factor (CPF) complex, which plays a key role in polyadenylation-dependent pre-mRNA 3'-end formation and cooperates with cleavage factors including the CFIA complex and NAB4/CFIB. Component of the APT complex, which may be involved in polyadenylation-independent transcript 3'-end formation. PTI1 is required for 3'-end formation of snoRNAs. The polypeptide is Protein PTI1 (PTI1) (Saccharomyces cerevisiae (strain ATCC 204508 / S288c) (Baker's yeast)).